Consider the following 310-residue polypeptide: MPKRAKKNEEGVDGEADNGTAAAKKEKKGKEPEAPILYEDPPEKLTSKDGRAANMKITSWNVDGLRAWVKKNGLDWVRKEDPDILCLQETKCAEKALPADITGMPEYPHKYWAGSEDKEGYSGVAMLCKTEPLNVTYGIGKEEHDKEGRVITAEFPDFFLVTAYVPNASRGLVRLDYRKTWDVDFRAYLCGLDARKPLVLCGDLNVAHQEIDLKNPKGNRKNAGFTPEEREGFTQLLEAGFTDSFRELYPDQAYAYTFWTYMMNARSKNVGWRLDYFVLSSALLPGLCDSKIRNTAMGSDHCPITLFLAV.

The disordered stretch occupies residues 1 to 51 (MPKRAKKNEEGVDGEADNGTAAAKKEKKGKEPEAPILYEDPPEKLTSKDGR). Residues 41–51 (PPEKLTSKDGR) are compositionally biased toward basic and acidic residues. Asp63 and Glu89 together coordinate Mg(2+). Tyr164 is an active-site residue. Mg(2+) is bound by residues Asp203, Asn205, and Asp300. Asp203 functions as the Proton donor/acceptor in the catalytic mechanism.

The protein belongs to the DNA repair enzymes AP/ExoA family. Mg(2+) is required as a cofactor. It depends on Mn(2+) as a cofactor.

The protein localises to the nucleus. It is found in the nucleolus. It localises to the nucleus speckle. The protein resides in the endoplasmic reticulum. Its subcellular location is the cytoplasm. The protein localises to the mitochondrion. The catalysed reaction is Exonucleolytic cleavage in the 3'- to 5'-direction to yield nucleoside 5'-phosphates.. Functionally, functions as an apurinic/apyrimidinic (AP) endodeoxyribonuclease in the DNA base excision repair (BER) pathway of DNA lesions induced by oxidative and alkylating agents. Initiates repair of AP sites in DNA by catalyzing hydrolytic incision of the phosphodiester backbone immediately adjacent to the damage, generating a single-strand break with 5'-deoxyribose phosphate and 3'-hydroxyl ends. Has 3'-5' exoribonuclease activity on mismatched deoxyribonucleotides at the 3' termini of nicked or gapped DNA molecules during short-patch BER. May also play a role in the epigenetic regulation of gene expression by participating in DNA demethylation. Required for passage through the mid-blastula transition MBT. May also act as an endoribonuclease involved in the control of single-stranded RNA metabolism. Has no redox activity. Binds DNA and RNA. The sequence is that of DNA repair nuclease APEX1 (apex1) from Danio rerio (Zebrafish).